A 325-amino-acid polypeptide reads, in one-letter code: Glutarate 2-hydroxylase (325 aa).

Fe cation contacts are provided by histidine 160, aspartate 162, and histidine 292.

Belongs to the glutarate hydroxylase family. As to quaternary structure, homotetramer. Fe(2+) is required as a cofactor.

The enzyme catalyses glutarate + 2-oxoglutarate + O2 = (S)-2-hydroxyglutarate + succinate + CO2. The protein operates within amino-acid degradation. Functionally, acts as an alpha-ketoglutarate-dependent dioxygenase catalyzing hydroxylation of glutarate (GA) to L-2-hydroxyglutarate (L2HG). Functions in a L-lysine degradation pathway that proceeds via cadaverine, glutarate and L-2-hydroxyglutarate. This is Glutarate 2-hydroxylase from Escherichia coli O17:K52:H18 (strain UMN026 / ExPEC).